We begin with the raw amino-acid sequence, 384 residues long: Anhydro-N-acetylmuramic acid kinase (384 aa).

Glycine 9–aspartate 16 is an ATP binding site.

This sequence belongs to the anhydro-N-acetylmuramic acid kinase family.

It carries out the reaction 1,6-anhydro-N-acetyl-beta-muramate + ATP + H2O = N-acetyl-D-muramate 6-phosphate + ADP + H(+). Its pathway is amino-sugar metabolism; 1,6-anhydro-N-acetylmuramate degradation. The protein operates within cell wall biogenesis; peptidoglycan recycling. Its function is as follows. Catalyzes the specific phosphorylation of 1,6-anhydro-N-acetylmuramic acid (anhMurNAc) with the simultaneous cleavage of the 1,6-anhydro ring, generating MurNAc-6-P. Is required for the utilization of anhMurNAc either imported from the medium or derived from its own cell wall murein, and thus plays a role in cell wall recycling. The polypeptide is Anhydro-N-acetylmuramic acid kinase (Streptomyces avermitilis (strain ATCC 31267 / DSM 46492 / JCM 5070 / NBRC 14893 / NCIMB 12804 / NRRL 8165 / MA-4680)).